A 940-amino-acid polypeptide reads, in one-letter code: Protein translocase subunit SecA (940 aa).

ATP-binding positions include Gln86, 104 to 108, and Asp494; that span reads GEGKT. Residues 884–940 form a disordered region; sequence ATAKAQKDQQAEDAVLVGEDEPETPQGPPARGAFGQPTGASSAPQNREERRKADRRK. A compositionally biased stretch (basic and acidic residues) spans 929 to 940; sequence NREERRKADRRK.

This sequence belongs to the SecA family. In terms of assembly, monomer and homodimer. Part of the essential Sec protein translocation apparatus which comprises SecA, SecYEG and auxiliary proteins SecDF. Other proteins may also be involved.

The protein resides in the cell membrane. It is found in the cytoplasm. The enzyme catalyses ATP + H2O + cellular proteinSide 1 = ADP + phosphate + cellular proteinSide 2.. In terms of biological role, part of the Sec protein translocase complex. Interacts with the SecYEG preprotein conducting channel. Has a central role in coupling the hydrolysis of ATP to the transfer of proteins into and across the cell membrane, serving as an ATP-driven molecular motor driving the stepwise translocation of polypeptide chains across the membrane. The sequence is that of Protein translocase subunit SecA from Clavibacter sepedonicus (Clavibacter michiganensis subsp. sepedonicus).